A 305-amino-acid polypeptide reads, in one-letter code: tRNA dimethylallyltransferase (305 aa).

Glycine 8 to serine 15 lines the ATP pocket. Residue threonine 10 to serine 15 coordinates substrate.

The protein belongs to the IPP transferase family. Monomer. The cofactor is Mg(2+).

It carries out the reaction adenosine(37) in tRNA + dimethylallyl diphosphate = N(6)-dimethylallyladenosine(37) in tRNA + diphosphate. In terms of biological role, catalyzes the transfer of a dimethylallyl group onto the adenine at position 37 in tRNAs that read codons beginning with uridine, leading to the formation of N6-(dimethylallyl)adenosine (i(6)A). In Mycobacterium sp. (strain KMS), this protein is tRNA dimethylallyltransferase.